Consider the following 231-residue polypeptide: Phosphoribosylformylglycinamidine synthase subunit PurQ (231 aa).

One can recognise a Glutamine amidotransferase type-1 domain in the interval 7-231 (GVVVFPGSNC…RLFASLFRQL (225 aa)). The Nucleophile role is filled by Cys-89. Catalysis depends on residues His-206 and Glu-208.

Part of the FGAM synthase complex composed of 1 PurL, 1 PurQ and 2 PurS subunits.

The protein resides in the cytoplasm. It carries out the reaction N(2)-formyl-N(1)-(5-phospho-beta-D-ribosyl)glycinamide + L-glutamine + ATP + H2O = 2-formamido-N(1)-(5-O-phospho-beta-D-ribosyl)acetamidine + L-glutamate + ADP + phosphate + H(+). The enzyme catalyses L-glutamine + H2O = L-glutamate + NH4(+). It functions in the pathway purine metabolism; IMP biosynthesis via de novo pathway; 5-amino-1-(5-phospho-D-ribosyl)imidazole from N(2)-formyl-N(1)-(5-phospho-D-ribosyl)glycinamide: step 1/2. In terms of biological role, part of the phosphoribosylformylglycinamidine synthase complex involved in the purines biosynthetic pathway. Catalyzes the ATP-dependent conversion of formylglycinamide ribonucleotide (FGAR) and glutamine to yield formylglycinamidine ribonucleotide (FGAM) and glutamate. The FGAM synthase complex is composed of three subunits. PurQ produces an ammonia molecule by converting glutamine to glutamate. PurL transfers the ammonia molecule to FGAR to form FGAM in an ATP-dependent manner. PurS interacts with PurQ and PurL and is thought to assist in the transfer of the ammonia molecule from PurQ to PurL. This chain is Phosphoribosylformylglycinamidine synthase subunit PurQ, found in Chlorobium luteolum (strain DSM 273 / BCRC 81028 / 2530) (Pelodictyon luteolum).